The sequence spans 654 residues: NADH-ubiquinone oxidoreductase chain 5 (654 aa).

16 helical membrane-spanning segments follow: residues 1–21, 30–50, 76–96, 113–133, 135–155, 178–198, 200–220, 241–261, 274–294, 301–320, 324–346, 365–385, 406–426, 451–471, 510–530, and 612–632; these read MYLA…FLGR, LITC…FYEV, FIYD…SALV, FFAY…GDNY, VMFI…NFWF, FSIG…TTVF, LAPF…LVAA, TPVS…YLLL, LILI…TGLL, VIAY…CGLS, VALF…AGSV, LLPF…ALPF, SGNL…MYSI, PLIM…FGYV, FLPL…YWIF, and TYAM…FFIG.

This sequence belongs to the complex I subunit 5 family.

It localises to the mitochondrion inner membrane. It catalyses the reaction a ubiquinone + NADH + 5 H(+)(in) = a ubiquinol + NAD(+) + 4 H(+)(out). Functionally, core subunit of the mitochondrial membrane respiratory chain NADH dehydrogenase (Complex I) that is believed to belong to the minimal assembly required for catalysis. Complex I functions in the transfer of electrons from NADH to the respiratory chain. The immediate electron acceptor for the enzyme is believed to be ubiquinone. The polypeptide is NADH-ubiquinone oxidoreductase chain 5 (ND5) (Rhizopus stolonifer (Rhizopus nigricans)).